A 158-amino-acid chain; its full sequence is UPF0225 protein Pfl01_1218 (158 aa).

This sequence belongs to the UPF0225 family.

In Pseudomonas fluorescens (strain Pf0-1), this protein is UPF0225 protein Pfl01_1218.